The primary structure comprises 616 residues: Chaperone protein HscA (616 aa).

It belongs to the heat shock protein 70 family.

Chaperone involved in the maturation of iron-sulfur cluster-containing proteins. Has a low intrinsic ATPase activity which is markedly stimulated by HscB. Involved in the maturation of IscU. The chain is Chaperone protein HscA from Salmonella enteritidis PT4 (strain P125109).